The following is a 220-amino-acid chain: Pyridoxine/pyridoxamine 5'-phosphate oxidase (220 aa).

Residues 13–16 (RVEY) and Lys77 contribute to the substrate site. FMN contacts are provided by residues 72-77 (RTVLCK), 87-88 (FT), Lys94, and Gln116. Substrate is bound by residues Tyr134, Arg138, and Ser142. Residues 151 to 152 (QS) and Trp197 each bind FMN. A substrate-binding site is contributed by 203–205 (RLH). An FMN-binding site is contributed by Arg207.

The protein belongs to the pyridoxamine 5'-phosphate oxidase family. Homodimer. It depends on FMN as a cofactor.

It carries out the reaction pyridoxamine 5'-phosphate + O2 + H2O = pyridoxal 5'-phosphate + H2O2 + NH4(+). The enzyme catalyses pyridoxine 5'-phosphate + O2 = pyridoxal 5'-phosphate + H2O2. The protein operates within cofactor metabolism; pyridoxal 5'-phosphate salvage; pyridoxal 5'-phosphate from pyridoxamine 5'-phosphate: step 1/1. It participates in cofactor metabolism; pyridoxal 5'-phosphate salvage; pyridoxal 5'-phosphate from pyridoxine 5'-phosphate: step 1/1. Its function is as follows. Catalyzes the oxidation of either pyridoxine 5'-phosphate (PNP) or pyridoxamine 5'-phosphate (PMP) into pyridoxal 5'-phosphate (PLP). The chain is Pyridoxine/pyridoxamine 5'-phosphate oxidase from Mycolicibacterium paratuberculosis (strain ATCC BAA-968 / K-10) (Mycobacterium paratuberculosis).